Reading from the N-terminus, the 138-residue chain is Cysteine desulfuration protein SufE (138 aa).

Residue Cys51 is the Cysteine persulfide intermediate of the active site.

This sequence belongs to the SufE family. As to quaternary structure, homodimer. Interacts with SufS.

Its subcellular location is the cytoplasm. It functions in the pathway cofactor biosynthesis; iron-sulfur cluster biosynthesis. In terms of biological role, participates in cysteine desulfuration mediated by SufS. Cysteine desulfuration mobilizes sulfur from L-cysteine to yield L-alanine and constitutes an essential step in sulfur metabolism for biosynthesis of a variety of sulfur-containing biomolecules. Functions as a sulfur acceptor for SufS, by mediating the direct transfer of the sulfur atom from the S-sulfanylcysteine of SufS, an intermediate product of cysteine desulfuration process. This chain is Cysteine desulfuration protein SufE, found in Salmonella choleraesuis (strain SC-B67).